Here is a 379-residue protein sequence, read N- to C-terminus: MLHSSLHPSIPQPRGRRAKKAAFVLLSVCLVVLWDLGERPEHILQWLMLHLASLQLGLLFKGVCSLVEELRHVHSRYQGSYWKAVRACLGCPIRCGTLLLLSCYFYTPFPNTTHLPFTWTLALLGLSQALSILLDLQDLAPAEVSAVCERRNLNVAQGMAWSFYIGYLRLILPGLPARIHSYNQHHNNLLRGAGSHRLYILFPLDCGVPDDLSMVDPNIRFLHELPLQKADRAGIKSRVYTNSVYELLENGRPVGACVLEYATPLQTLFAMSQDSRAGFSREDRLEQAKLFCKTLEDILADAPECQNNCRLVVYQEPAEGGNFSLSQEILRHLKQEEKEEVTVDSARTSVMPDPSMLPQGPELLISSMDQPLPLRTDVF.

The next 2 membrane-spanning stretches (helical) occupy residues alanine 18–glutamate 38 and isoleucine 43–valine 63. 2 S-palmitoyl cysteine lipidation sites follow: cysteine 88 and cysteine 91. The next 2 helical transmembrane spans lie at leucine 89–phenylalanine 109 and histidine 114–leucine 134. The segment at leucine 153–glutamate 340 is cyclic dinucleotide-binding domain (CBD). 2',3'-cGAMP contacts are provided by serine 162, tyrosine 167, arginine 238, and threonine 263. 3',3'-c-di-GMP contacts are provided by residues serine 162, tyrosine 167, arginine 238–threonine 241, and threonine 263. 2',3'-cUAMP is bound by residues tyrosine 167, arginine 238, and threonine 263. The segment at lysine 338–leucine 363 is disordered. Positions glutamate 340–phenylalanine 379 are C-terminal tail (CTT). Serine 355 carries the post-translational modification Phosphoserine. A pLxIS motif motif is present at residues leucine 363–serine 366. Residue serine 366 is modified to Phosphoserine; by TBK1.

The protein belongs to the STING family. Homodimer; forms a homodimer in absence of cyclic nucleotide (c-di-GMP or cGAMP). Homotetramer; in presence of cyclic nucleotide (c-di-GMP or cGAMP), forms tetramers and higher-order oligomers through side-by-side packing. Interacts (when phosphorylated) with IRF3; following activation and phosphorylation on the pLxIS motif by TBK1, recruits IRF3. Interacts with TBK1; when homodimer, leading to subsequent production of IFN-beta. Interacts (via transmembrane domain) with TMEM203. Post-translationally, phosphorylation by TBK1 leads to activation and production of IFN-beta. Following cyclic nucleotide (c-di-GMP or cGAMP)-binding, activation and translocation from the endoplasmic reticulum, STING1 is phosphorylated by TBK1 at Ser-366 in the pLxIS motif. The phosphorylated pLxIS motif constitutes an IRF3-binding motif, leading to recruitment of the transcription factor IRF3 to induce type-I interferons and other cytokines. In contrast, lacks phosphorylation site at position 358, leading to reduced production of type-I interferons and other cytokines.

Its subcellular location is the endoplasmic reticulum membrane. The protein localises to the cytoplasm. The protein resides in the perinuclear region. It is found in the endoplasmic reticulum-Golgi intermediate compartment membrane. It localises to the golgi apparatus membrane. Its subcellular location is the cytoplasmic vesicle. The protein localises to the autophagosome membrane. The protein resides in the mitochondrion outer membrane. It is found in the cell membrane. It catalyses the reaction H(+)(in) = H(+)(out). Its function is as follows. Facilitator of innate immune signaling that acts as a sensor of cytosolic DNA from bacteria and viruses and promotes low production of type I interferon (IFN-alpha and IFN-beta). Compared to other mammals, STING1-dependent type I interferon induction is strongly reduced in bats, suggesting that the cGAS-STING pathway promotes a limited inflammatory response. Innate immune response is triggered in response to non-CpG double-stranded DNA from viruses and bacteria delivered to the cytoplasm. Acts by binding cyclic dinucleotides: recognizes and binds cyclic di-GMP (c-di-GMP), a second messenger produced by bacteria, cyclic UMP-AMP (2',3'-cUAMP), and cyclic GMP-AMP (cGAMP), a messenger produced by CGAS in response to DNA virus in the cytosol. Upon binding to c-di-GMP, cUAMP or cGAMP, STING1 oligomerizes, translocates from the endoplasmic reticulum and is phosphorylated by TBK1 on the pLxIS motif, leading to recruitment and subsequent activation of the transcription factor IRF3 to induce expression of type I interferon and exert a potent anti-viral state. In addition to promote the production of type I interferons, plays a direct role in autophagy. Following cGAMP-binding, STING1 buds from the endoplasmic reticulum into COPII vesicles, which then form the endoplasmic reticulum-Golgi intermediate compartment (ERGIC). The ERGIC serves as the membrane source for WIPI2 recruitment and LC3 lipidation, leading to formation of autophagosomes that target cytosolic DNA or DNA viruses for degradation by the lysosome. Promotes autophagy by acting as a proton channel that directs proton efflux from the Golgi to facilitate MAP1LC3B/LC3B lipidation. The autophagy- and interferon-inducing activities can be uncoupled and autophagy induction is independent of TBK1 phosphorylation. This Pteronotus parnellii (Parnell's mustached bat) protein is Stimulator of interferon genes protein.